A 95-amino-acid polypeptide reads, in one-letter code: Aspartyl/glutamyl-tRNA(Asn/Gln) amidotransferase subunit C (95 aa).

A compositionally biased stretch (basic and acidic residues) spans 55 to 67 (ALERRNVTREDQV). The disordered stretch occupies residues 55–83 (ALERRNVTREDQVHNSLTNDKALENAPET).

Belongs to the GatC family. In terms of assembly, heterotrimer of A, B and C subunits.

The catalysed reaction is L-glutamyl-tRNA(Gln) + L-glutamine + ATP + H2O = L-glutaminyl-tRNA(Gln) + L-glutamate + ADP + phosphate + H(+). The enzyme catalyses L-aspartyl-tRNA(Asn) + L-glutamine + ATP + H2O = L-asparaginyl-tRNA(Asn) + L-glutamate + ADP + phosphate + 2 H(+). Allows the formation of correctly charged Asn-tRNA(Asn) or Gln-tRNA(Gln) through the transamidation of misacylated Asp-tRNA(Asn) or Glu-tRNA(Gln) in organisms which lack either or both of asparaginyl-tRNA or glutaminyl-tRNA synthetases. The reaction takes place in the presence of glutamine and ATP through an activated phospho-Asp-tRNA(Asn) or phospho-Glu-tRNA(Gln). The sequence is that of Aspartyl/glutamyl-tRNA(Asn/Gln) amidotransferase subunit C from Natranaerobius thermophilus (strain ATCC BAA-1301 / DSM 18059 / JW/NM-WN-LF).